We begin with the raw amino-acid sequence, 213 residues long: MAKMTKIEIQKRNKERVNLFLDGEYAFSISAELVYKESLKVNSEINPEKLRTLAESENFMRCKESALRIIEKTYKTEKEVRDKLKLKEYDESSIDKAIEFLKKYNFINDGNYTKIFIKDKLRSMGSQKIKYTLLRKGICKEIIDEELLNLDKENEKDVAFDIAQKKYNLIKNKETDTYKISGKLYRYLISKGYNTEVTSQVIKKVMAVDVDDF.

It belongs to the RecX family.

Its subcellular location is the cytoplasm. Functionally, modulates RecA activity. The sequence is that of Regulatory protein RecX from Clostridium beijerinckii (strain ATCC 51743 / NCIMB 8052) (Clostridium acetobutylicum).